The primary structure comprises 471 residues: 3-isopropylmalate dehydratase large subunit (471 aa).

Residues Cys347, Cys407, and Cys410 each coordinate [4Fe-4S] cluster.

Belongs to the aconitase/IPM isomerase family. LeuC type 1 subfamily. As to quaternary structure, heterodimer of LeuC and LeuD. Requires [4Fe-4S] cluster as cofactor.

The enzyme catalyses (2R,3S)-3-isopropylmalate = (2S)-2-isopropylmalate. Its pathway is amino-acid biosynthesis; L-leucine biosynthesis; L-leucine from 3-methyl-2-oxobutanoate: step 2/4. In terms of biological role, catalyzes the isomerization between 2-isopropylmalate and 3-isopropylmalate, via the formation of 2-isopropylmaleate. This is 3-isopropylmalate dehydratase large subunit from Granulibacter bethesdensis (strain ATCC BAA-1260 / CGDNIH1).